We begin with the raw amino-acid sequence, 430 residues long: UPF0597 protein BDI_1130 (430 aa).

Belongs to the UPF0597 family.

The protein is UPF0597 protein BDI_1130 of Parabacteroides distasonis (strain ATCC 8503 / DSM 20701 / CIP 104284 / JCM 5825 / NCTC 11152).